Reading from the N-terminus, the 1235-residue chain is STE20-like serine/threonine-protein kinase (1235 aa).

The residue at position 14 (S14) is a Phosphoserine. Residues 34-292 enclose the Protein kinase domain; sequence WEIIGELGDG…TSQLLQHPFV (259 aa). ATP contacts are provided by residues 40-48 and K63; that span reads LGDGAFGKV. D155 acts as the Proton acceptor in catalysis. Phosphothreonine is present on T183. S189 is modified (phosphoserine). The disordered stretch occupies residues 309-351; sequence AEVTEEVEDGKEEDEEEETENSLPIPASKRASSDLSIASSEED. A compositionally biased stretch (acidic residues) spans 312–328; sequence TEEVEDGKEEDEEEETE. Phosphoserine occurs at positions 330, 340, 341, 344, 347, 348, 354, and 372. Disordered stretches follow at residues 363–393 and 421–441; these read VSEK…PEKA and ENER…DQET. A compositionally biased stretch (basic and acidic residues) spans 421 to 432; sequence ENEREKRPKLEN. Phosphoserine is present on S518. The interval 519–539 is disordered; that stretch reads EVGLTKEDTQEKLGEDDKTQK. Over residues 522–539 the composition is skewed to basic and acidic residues; that stretch reads LTKEDTQEKLGEDDKTQK. S565 is subject to Phosphoserine. A Phosphothreonine modification is found at T569. S571, S647, S655, and S667 each carry phosphoserine. The interval 613 to 760 is disordered; it reads EGKNKEQAIN…GTGSTADTSS (148 aa). A compositionally biased stretch (acidic residues) spans 638–650; the sequence is EGEEITESSSTEE. The span at 679–695 shows a compositional bias: basic and acidic residues; sequence IDKEKKEIPVSIKKEPE. Residues 749–760 show a composition bias toward low complexity; the sequence is DSGTGSTADTSS. S777 and S779 each carry phosphoserine. T814 carries the post-translational modification Phosphothreonine. A Phosphoserine modification is found at S818. The stretch at 826-1069 forms a coiled coil; that stretch reads LRRQELRELR…LKNRQTQERA (244 aa). Positions 875–910 constitute a UVR domain; the sequence is DQEIENLEKQQKQTIERLEQEHTNRLRDEAKRIKGE. T1097 carries the post-translational modification Phosphothreonine. Residues 1109 to 1183 are a coiled coil; it reads AAQEEKRQKN…ELKEWREKLR (75 aa).

Belongs to the protein kinase superfamily. STE Ser/Thr protein kinase family. STE20 subfamily. Post-translationally, proteolytically cleaved by caspase-3. Autophosphorylated. In terms of tissue distribution, ubiquitously expressed. Highest expression is found in heart and in skeletal muscle.

The protein resides in the cytoplasm. It carries out the reaction L-seryl-[protein] + ATP = O-phospho-L-seryl-[protein] + ADP + H(+). The enzyme catalyses L-threonyl-[protein] + ATP = O-phospho-L-threonyl-[protein] + ADP + H(+). Mediates apoptosis and actin stress fiber dissolution. The protein is STE20-like serine/threonine-protein kinase (SLK) of Homo sapiens (Human).